The primary structure comprises 420 residues: UDP-N-acetyl-D-mannosamine dehydrogenase (420 aa).

5 residues coordinate NAD(+): Tyr13, Ile14, Asp33, Thr85, and Thr126. Residues Arg160, Val161, Lys212, Asn216, Arg219, His250, Arg252, and Gly263 each coordinate UDP-N-acetyl-alpha-D-mannosaminouronate. Lys212 (proton donor/acceptor) is an active-site residue. The active-site Nucleophile is the Cys266. UDP-N-acetyl-alpha-D-mannosaminouronate-binding residues include Phe330 and Lys331. Arg338 provides a ligand contact to NAD(+). Residue Lys416 coordinates UDP-N-acetyl-alpha-D-mannosaminouronate.

It belongs to the UDP-glucose/GDP-mannose dehydrogenase family. WecC subfamily. As to quaternary structure, homodimer.

It catalyses the reaction UDP-N-acetyl-alpha-D-mannosamine + 2 NAD(+) + H2O = UDP-N-acetyl-alpha-D-mannosaminouronate + 2 NADH + 3 H(+). The protein operates within bacterial outer membrane biogenesis; enterobacterial common antigen biosynthesis. Catalyzes the four-electron oxidation of UDP-N-acetyl-D-mannosamine (UDP-ManNAc), reducing NAD(+) and releasing UDP-N-acetylmannosaminuronic acid (UDP-ManNAcA). The sequence is that of UDP-N-acetyl-D-mannosamine dehydrogenase from Salmonella typhimurium (strain LT2 / SGSC1412 / ATCC 700720).